Consider the following 452-residue polypeptide: Trigger factor (452 aa).

The PPIase FKBP-type domain maps to 170 to 256 (NSIVKVDFVE…IKSIKKRDLP (87 aa)).

The protein belongs to the FKBP-type PPIase family. Tig subfamily.

It is found in the cytoplasm. It catalyses the reaction [protein]-peptidylproline (omega=180) = [protein]-peptidylproline (omega=0). Functionally, involved in protein export. Acts as a chaperone by maintaining the newly synthesized protein in an open conformation. Functions as a peptidyl-prolyl cis-trans isomerase. This is Trigger factor from Borrelia garinii subsp. bavariensis (strain ATCC BAA-2496 / DSM 23469 / PBi) (Borreliella bavariensis).